Reading from the N-terminus, the 109-residue chain is SRA stem-loop-interacting RNA-binding protein, mitochondrial (109 aa).

Phosphoserine is present on Ser-15. Residues 19-103 (PVAFVRRIPW…RRPKLPQTSD (85 aa)) enclose the RRM domain. A Phosphothreonine modification is found at Thr-101. Residue Ser-102 is modified to Phosphoserine.

As to expression, ubiquitously expressed, with highest level in heart, liver, skeletal muscle and testis.

It is found in the mitochondrion. Its subcellular location is the nucleus. RNA-binding protein that acts as a nuclear receptor corepressor. Probably acts by binding the SRA RNA, and repressing the SRA-mediated nuclear receptor coactivation. Binds the STR7 loop of SRA RNA. Also able to repress glucocorticoid (GR), androgen (AR), thyroid (TR) and VDR-mediated transactivation. In Homo sapiens (Human), this protein is SRA stem-loop-interacting RNA-binding protein, mitochondrial (SLIRP).